The following is a 280-amino-acid chain: Putative S-adenosyl-L-methionine-dependent methyltransferase FRAAL3836 (280 aa).

S-adenosyl-L-methionine-binding positions include D121 and 150-151 (DL).

This sequence belongs to the UPF0677 family.

Exhibits S-adenosyl-L-methionine-dependent methyltransferase activity. This chain is Putative S-adenosyl-L-methionine-dependent methyltransferase FRAAL3836, found in Frankia alni (strain DSM 45986 / CECT 9034 / ACN14a).